Here is a 549-residue protein sequence, read N- to C-terminus: Cation/acetate symporter ActP (549 aa).

13 consecutive transmembrane segments (helical) span residues 33–53 (WQAIIMFLIFVVFTLGITYWA), 77–97 (LAIAGDYMSAASFLGISALVF), 103–123 (GLIYSLGFLVGWPIILFLIAE), 148–168 (ILSACGSLVVVALYLIAQMVG), 183–203 (IAVVLVGVLMMMYVLFGGMLA), 206–226 (WVQIIKAVLLLFGASFMAFMV), 262–282 (ISALSLGLGLMFGTAGLPHIL), 303–323 (GFMGYFYILTFIIGFGAIMLV), 355–375 (LFLGFISAVAFATILAVVAGL), 404–424 (VSKITVLILGVIAIILGMLFE), 428–448 (IAFMVGLAFAIAASCNFPIIL), 464–484 (GGWLGLITAVVLMILGPTIWV), and 493–513 (IFPYEYPALFSISVAFLGIWF).

It belongs to the sodium:solute symporter (SSF) (TC 2.A.21) family.

It localises to the cell inner membrane. Functionally, transports acetate. This chain is Cation/acetate symporter ActP, found in Shigella boydii serotype 4 (strain Sb227).